The following is a 123-amino-acid chain: MRKGVVAGLCLALVVMCLYLPQPCEAQYEALVTSILGKLTGLWHNDSVDFMGHICYFRRRPKIRRFKLYHEGKFWCPGWAPFEGRSRTKSRSGSSREATKDFVRKALQNGLVTQQDASLWLNN.

The signal sequence occupies residues 1-26; that stretch reads MRKGVVAGLCLALVVMCLYLPQPCEA. The N-linked (GlcNAc...) asparagine glycan is linked to asparagine 45. Cysteine 55 and cysteine 76 form a disulfide bridge.

Isoform 1 is highly expressed in muscle and stomach, moderately in heart and gill and at lower levels in hemocytes and hepatopancreas. Isoform 2 is mainly expressed in gill, hepatopancreas, muscle and eyestalk.

It is found in the secreted. In terms of biological role, may bind to bacterial LPS and thus specifically inhibit the LPS-mediated activation of the hemolymph coagulation. It has a strong antibacterial effect especially on the growth of Gram-negative bacteria. This Portunus trituberculatus (Swimming crab) protein is Anti-lipopolysaccharide factor.